A 94-amino-acid chain; its full sequence is MFTINAEVRKEQGKGASRRLRAANKFPAIIYGGAEAPIAIELDHDQVMNMQAKAEFYSEVLTIVVDGKEVKVKAQAVQRHAFKPKLTHIDFVRA.

The protein belongs to the bacterial ribosomal protein bL25 family. Part of the 50S ribosomal subunit; part of the 5S rRNA/L5/L18/L25 subcomplex. Contacts the 5S rRNA. Binds to the 5S rRNA independently of L5 and L18.

In terms of biological role, this is one of the proteins that binds to the 5S RNA in the ribosome where it forms part of the central protuberance. The protein is Large ribosomal subunit protein bL25 of Citrobacter koseri (strain ATCC BAA-895 / CDC 4225-83 / SGSC4696).